Here is a 151-residue protein sequence, read N- to C-terminus: MSTPDNRSVNFFSLFRRGQHYAKTWPMEKRLAPVFVENRVIRMTRYAIRFMPPIAVFTLCWQIALGGQLGPAVATALFALSLPMQGMWWLGKRSVTPLPPSILNWFYEVRGKLQEAGQALSPVEGKPDYQALADTLKRAFKQLDKTFLDDL.

A run of 2 helical transmembrane segments spans residues tyrosine 46–leucine 65 and leucine 69–glycine 91.

This sequence belongs to the UPF0208 family.

It localises to the cell inner membrane. In Citrobacter koseri (strain ATCC BAA-895 / CDC 4225-83 / SGSC4696), this protein is UPF0208 membrane protein CKO_00500.